Consider the following 398-residue polypeptide: L-talarate/galactarate dehydratase (398 aa).

Residues 46 to 48 (DAK), 82 to 83 (KR), and Lys195 contribute to the substrate site. Lys197 (proton acceptor) is an active-site residue. Asp226 serves as a coordination point for Mg(2+). Asn228 contacts substrate. Positions 252 and 278 each coordinate Mg(2+). His328 acts as the Proton donor/acceptor in catalysis. Glu348 provides a ligand contact to substrate.

Belongs to the mandelate racemase/muconate lactonizing enzyme family. In terms of assembly, homooctamer; tetramer of dimers. It depends on Mg(2+) as a cofactor.

The enzyme catalyses L-altrarate = 5-dehydro-4-deoxy-D-glucarate + H2O. It catalyses the reaction galactarate = 5-dehydro-4-deoxy-D-glucarate + H2O. It carries out the reaction L-altrarate = galactarate. With respect to regulation, competitively inhibited by tartronate. Catalyzes the efficient dehydration of both L-talarate (also called L-altrarate) and galactarate to 5-keto-4-deoxy-D-glucarate (5-KDG). Also catalyzes the epimerization of L-talarate to galactarate; epimerization occurs in competition with dehydration. Is required for the utilization of L-talarate as a carbon source. Also functions in galactarate utilization. Is not active on other acid sugars. In Salmonella typhimurium (strain LT2 / SGSC1412 / ATCC 700720), this protein is L-talarate/galactarate dehydratase.